The chain runs to 332 residues: Fructose-1,6-bisphosphatase class 1 (332 aa).

Residues E89, D110, L112, and D113 each coordinate Mg(2+). Substrate contacts are provided by residues 113 to 116 (DGSS), N206, Y239, 257 to 259 (YLY), and K269. Residue E275 coordinates Mg(2+).

It belongs to the FBPase class 1 family. As to quaternary structure, homotetramer. The cofactor is Mg(2+).

It localises to the cytoplasm. The catalysed reaction is beta-D-fructose 1,6-bisphosphate + H2O = beta-D-fructose 6-phosphate + phosphate. It functions in the pathway carbohydrate biosynthesis; gluconeogenesis. The sequence is that of Fructose-1,6-bisphosphatase class 1 from Cronobacter sakazakii (strain ATCC BAA-894) (Enterobacter sakazakii).